The primary structure comprises 367 residues: ELAV-like protein 3 (367 aa).

RRM domains are found at residues 39 to 117 (TNLI…YARP), 125 to 205 (ANLY…FANN), and 284 to 362 (WCIF…FKTS).

This sequence belongs to the RRM elav family. Interacts with MAP1B light chain LC1. In terms of tissue distribution, brain specific.

In terms of biological role, RNA-binding protein that binds to AU-rich element (ARE) sequences of target mRNAs, including VEGF mRNA. May also bind poly-A tracts via RRM 3. May be involved in neuronal differentiation and maintenance. Plays a role in the stabilization of GAP43 mRNA and in spatial learning. This is ELAV-like protein 3 (ELAVL3) from Homo sapiens (Human).